The following is a 569-amino-acid chain: Proline--tRNA ligase (569 aa).

It belongs to the class-II aminoacyl-tRNA synthetase family. ProS type 1 subfamily. In terms of assembly, homodimer.

It is found in the cytoplasm. It catalyses the reaction tRNA(Pro) + L-proline + ATP = L-prolyl-tRNA(Pro) + AMP + diphosphate. Catalyzes the attachment of proline to tRNA(Pro) in a two-step reaction: proline is first activated by ATP to form Pro-AMP and then transferred to the acceptor end of tRNA(Pro). As ProRS can inadvertently accommodate and process non-cognate amino acids such as alanine and cysteine, to avoid such errors it has two additional distinct editing activities against alanine. One activity is designated as 'pretransfer' editing and involves the tRNA(Pro)-independent hydrolysis of activated Ala-AMP. The other activity is designated 'posttransfer' editing and involves deacylation of mischarged Ala-tRNA(Pro). The misacylated Cys-tRNA(Pro) is not edited by ProRS. This chain is Proline--tRNA ligase, found in Shewanella loihica (strain ATCC BAA-1088 / PV-4).